A 633-amino-acid chain; its full sequence is Micronuclear linker histone polyprotein (633 aa).

2 DNA-binding regions (HMG box) span residues 12-74 (PPKK…LFHY) and 96-164 (PKKP…KKWN). Residues 170 to 633 (AAQKKQTKRK…AYGKKANKKQ (464 aa)) are disordered. Residues 174–190 (KQTKRKNSTSKSRRSSS) show a composition bias toward basic residues. Composition is skewed to low complexity over residues 212–224 (SSAS…SSSS) and 253–271 (NSTS…SSSS). Composition is skewed to basic residues over residues 272-309 (KNKK…RKSS) and 330-352 (SNKR…RKSS). Composition is skewed to basic and acidic residues over residues 353–374 (KSQE…EGQK) and 382–401 (AKRD…EART). The span at 406-416 (NKSASKASKSG) shows a compositional bias: low complexity. A compositionally biased stretch (basic residues) spans 417–444 (SKSKGKSASKSKGKSSSKGKNSKSRSAS). Polar residues predominate over residues 446 to 469 (PKSNAAQNSNNTHQTADSSENASS). Basic and acidic residues predominate over residues 478–491 (RQREQKDMVNEKSN). Residues 496-524 (SKGKKNSKSNTRSKSKSKSASKSRKNASK) show a composition bias toward basic residues. 2 stretches are compositionally biased toward basic and acidic residues: residues 540–550 (SRSESKSKSEA) and 559–612 (EVIE…EDSK).

In terms of processing, all four histones are processed from the precursor molecule. Post-translationally, phosphorylated in growing and dividing cells but not in nongrowing (starved) cells. The N-terminus of MIC LH-alpha and MIC LH-delta is blocked.

It is found in the nucleus. The protein localises to the chromosome. The polypeptide is Micronuclear linker histone polyprotein (MLH) (Tetrahymena thermophila (strain SB210)).